The primary structure comprises 227 residues: NAD(P)H-quinone oxidoreductase subunit K, chloroplastic (227 aa).

The [4Fe-4S] cluster site is built by Cys-43, Cys-44, Cys-108, and Cys-139.

The protein belongs to the complex I 20 kDa subunit family. NDH is composed of at least 16 different subunits, 5 of which are encoded in the nucleus. The cofactor is [4Fe-4S] cluster.

Its subcellular location is the plastid. It localises to the chloroplast thylakoid membrane. The enzyme catalyses a plastoquinone + NADH + (n+1) H(+)(in) = a plastoquinol + NAD(+) + n H(+)(out). It carries out the reaction a plastoquinone + NADPH + (n+1) H(+)(in) = a plastoquinol + NADP(+) + n H(+)(out). In terms of biological role, NDH shuttles electrons from NAD(P)H:plastoquinone, via FMN and iron-sulfur (Fe-S) centers, to quinones in the photosynthetic chain and possibly in a chloroplast respiratory chain. The immediate electron acceptor for the enzyme in this species is believed to be plastoquinone. Couples the redox reaction to proton translocation, and thus conserves the redox energy in a proton gradient. This chain is NAD(P)H-quinone oxidoreductase subunit K, chloroplastic, found in Drimys granadensis.